Reading from the N-terminus, the 274-residue chain is HTH-type transcriptional regulator GadX (274 aa).

Residues 145-242 (TRVCTVINNN…GMTPTEYQER (98 aa)) enclose the HTH araC/xylS-type domain. 2 DNA-binding regions (H-T-H motif) span residues 162 to 183 (ARIA…REEE) and 209 to 232 (IKRV…RNYY).

Homodimer.

Positively regulates the expression of about fifteen genes involved in acid resistance such as gadA, gadB and gadC. Depending on the conditions (growth phase and medium), can repress gadW. This chain is HTH-type transcriptional regulator GadX (gadX), found in Shigella flexneri.